The primary structure comprises 478 residues: Ninja-family protein 7 (478 aa).

Disordered stretches follow at residues 1–247 (MDDD…LTPG), 336–374 (SFTAKDKADQTGTKQVDDGKKPREAGASSSAHAEDEKKA), and 454–478 (DAPAQDNSATLPAFPAGNQATSAEN). Positions 23 to 35 (KARDAPLEPKAEP) are enriched in basic and acidic residues. A compositionally biased stretch (polar residues) spans 169–179 (ISISTDDGSTG). Positions 180–189 (ENEDVAESEA) are enriched in acidic residues. Residues 233-242 (SFSGSESSSG) are compositionally biased toward low complexity. Basic and acidic residues predominate over residues 339-359 (AKDKADQTGTKQVDDGKKPRE).

This sequence belongs to the Ninja family.

The protein resides in the nucleus. This is Ninja-family protein 7 from Zea mays (Maize).